Here is a 308-residue protein sequence, read N- to C-terminus: Protoheme IX farnesyltransferase (308 aa).

Transmembrane regions (helical) follow at residues 31–51, 53–73, 102–122, 124–144, 149–169, 170–190, 242–262, and 288–308; these read VIELLLVTTIPAMLLADRGTV, PLLILNTLVGGMLAAAGANTL, HALIFGLVLTVTSFCWLWLST, LLSGLLAVATIAFYVFVYTML, TSQNVVWGGAAGCMPVMIGWS, AVTGTIQWPALVMFLIIFFWT, LATGWLYGAVALLAGAWFLVM, and YLAVVFCALAIDSALALPTLL.

Belongs to the UbiA prenyltransferase family. Protoheme IX farnesyltransferase subfamily.

The protein resides in the cell membrane. It catalyses the reaction heme b + (2E,6E)-farnesyl diphosphate + H2O = Fe(II)-heme o + diphosphate. It participates in porphyrin-containing compound metabolism; heme O biosynthesis; heme O from protoheme: step 1/1. In terms of biological role, converts heme B (protoheme IX) to heme O by substitution of the vinyl group on carbon 2 of heme B porphyrin ring with a hydroxyethyl farnesyl side group. This is Protoheme IX farnesyltransferase from Mycolicibacterium smegmatis (strain ATCC 700084 / mc(2)155) (Mycobacterium smegmatis).